A 1987-amino-acid polypeptide reads, in one-letter code: Transcriptional activator DEMETER (1987 aa).

Disordered stretches follow at residues 246–378 (TGHE…NKSP), 392–415 (DLENPGDARQGDSESEIVQNSSGA), and 793–901 (MPPE…GPSG). Polar residues predominate over residues 258–277 (SMQSIMDSSAVNATEATEQN). Positions 341–364 (ATQEKVKSKETGSAKKKNLKESAT) are enriched in basic and acidic residues. Positions 813-829 (NTASISKGASKGNSSPV) are enriched in polar residues. Residues 844-855 (PAKKGRAGRKKS) are compositionally biased toward basic residues. The DEMETER stretch occupies residues 955–1054 (KVDIDDETTR…AFMSLAARFP (100 aa)). Disordered stretches follow at residues 1324 to 1351 (LPGMGLSGSSSAVQEHQDDTQHNQQDEM) and 1439 to 1471 (TLADGKKPTSQWDSLRKDVEGNEGRQERNKNNM). Composition is skewed to basic and acidic residues over residues 1338 to 1351 (EHQDDTQHNQQDEM) and 1452 to 1469 (SLRKDVEGNEGRQERNKN). [4Fe-4S] cluster-binding residues include cysteine 1629, cysteine 1636, cysteine 1639, and cysteine 1645.

Belongs to the DNA glycosylase family. DEMETER subfamily. [4Fe-4S] cluster is required as a cofactor. In terms of tissue distribution, mainly expressed in immature flower buds, then decreases as the flower matures. Expressed in the ovule carpels, but not expressed in pollen stamens. Expressed in developing and mature ovules (stages 12-14), then strongly decreases after fertilization.

It is found in the nucleus. Functionally, transcriptional activator involved in gene imprinting. Catalyzes the release of 5-methylcytosine (5-meC) from DNA by a glycosylase/lyase mechanism. Allows the expression of the maternal copy of the imprinted MEA gene before fertilization, possibly by antagonizing or suppressing DNA methylation on target promoter. Probably acts by nicking the MEA promoter. Required for stable reproducible patterns of floral and vegetative development. The polypeptide is Transcriptional activator DEMETER (DME) (Arabidopsis thaliana (Mouse-ear cress)).